The chain runs to 232 residues: Anti-sigma-K factor RskA (232 aa).

Residues 1 to 90 (MTEHTDFELL…EVRRQSRWRT (90 aa)) lie on the Cytoplasmic side of the membrane. Residues 91 to 111 (AAFASAAAIAVGLGAFGLGVL) form a helical membrane-spanning segment. Residues 112–232 (TRPSPPPTVA…GTILAELPLG (121 aa)) lie on the Extracellular side of the membrane.

The protein belongs to the anti-sigma-K factor family.

It is found in the cell membrane. Functionally, an anti-sigma factor for extracytoplasmic function (ECF) sigma factor SigK. ECF sigma factors are held in an inactive form by an anti-sigma factor until released by regulated intramembrane proteolysis (RIP). RIP occurs when an extracytoplasmic signal triggers a concerted proteolytic cascade to transmit information and elicit cellular responses. The membrane-spanning regulatory substrate protein is first cut extracytoplasmically (site-1 protease, S1P), then within the membrane itself (site-2 protease, S2P, Rip1), while cytoplasmic proteases finish degrading the regulatory protein, liberating the sigma factor. This chain is Anti-sigma-K factor RskA (rskA), found in Mycobacterium tuberculosis (strain ATCC 25177 / H37Ra).